The chain runs to 936 residues: MRPRSGGRPGATGRRRRRLRRRPRGLRCSRLPPPPPLPLLLGLLLAAAGPGAARAKETAFVEVVLFESSPSGDYTTYTTGLTGRFSRAGATLSAEGEIVQMHPLGLCNNNDEEDLYEYGWVGVVKLEQPELDPKPCLTVLGKAKRAVQRGATAVIFDVSENPEAIDQLNQGSEDPLKRPVVYVKGADAIKLMNIVNKQKVARARIQHRPPRQPTEYFDMGIFLAFFVVVSLVCLILLVKIKLKQRRSQNSMNRLAVQALEKMETRKFNSKSKGRREGSCGALDTLSSSSTSDCAICLEKYIDGEELRVIPCTHRFHRKCVDPWLLQHHTCPHCRHNIIEQKGNPSAVCVETSNLSRGRQQRVTLPVHYPGRVHRTNAIPAYPTRTSMDSHGNPVTLLTMDRHGEQSLYSPQTPAYIRSYPPLHLDHSLAAHRCGLEHRAYSPAHPFRRPKLSGRSFSKAACFSQYETMYQHYYFQGLSYPEQEGQSPPSLAPRGPARAFPPSGSGSLLFPTVVHVAPPSHLESGSTSSFSCYHGHRSVCSGYLADCPGSDSSSSSSSGQCHCSSSDSVVDCTEVSNQGVYGSCSTFRSSLSSDYDPFIYRSRSPCRASEAGGSGSSGRGPALCFEGSPPPEELPAVHSHGAGRGEPWPGPASPSGDQVSTCSLEMNYSSNSSLEHRGPNSSTSEVGLEASPGAAPDLRRTWKGGHELPSCACCCEPQPSPAGPSAGAAGSSTLFLGPHLYEGSGPAGGEPQSGSSQGLYGLHPDHLPRTDGVKYEGLPCCFYEEKQVARGGGGGSGCYTEDYSVSVQYTLTEEPPPGCYPGARDLSQRIPIIPEDVDCDLGLPSDCQGTHSLGSWGGTRGPDTPRPHRGLGATREEERALCCQARALLRPGCPPEEAGAVRANFPSALQDTQESSTTATEAAGPRSHSADSSSPGA.

The interval 1 to 31 is disordered; the sequence is MRPRSGGRPGATGRRRRRLRRRPRGLRCSRL. An N-terminal signal peptide occupies residues 1–55; that stretch reads MRPRSGGRPGATGRRRRRLRRRPRGLRCSRLPPPPPLPLLLGLLLAAAGPGAARA. A compositionally biased stretch (basic residues) spans 13–27; that stretch reads GRRRRRLRRRPRGLR. The Extracellular portion of the chain corresponds to 56–219; it reads KETAFVEVVL…PRQPTEYFDM (164 aa). The chain crosses the membrane as a helical span at residues 220–240; it reads GIFLAFFVVVSLVCLILLVKI. The Cytoplasmic portion of the chain corresponds to 241–936; that stretch reads KLKQRRSQNS…HSADSSSPGA (696 aa). Residues 293-334 form an RING-type; atypical zinc finger; sequence CAICLEKYIDGEELRVIPCTHRFHRKCVDPWLLQHHTCPHCR. 4 disordered regions span residues 608–693, 739–758, 849–875, and 892–936; these read SEAG…SPGA, LYEG…SQGL, THSL…ATRE, and CPPE…SPGA. The span at 654–684 shows a compositional bias: polar residues; that stretch reads SGDQVSTCSLEMNYSSNSSLEHRGPNSSTSE. A compositionally biased stretch (low complexity) spans 913–922; the sequence is ESSTTATEAA.

Belongs to the ZNRF3 family. Interacts with LRP6, FZD4, FZD5, FZD6 and FZD8. Interacts with RSPO1; interaction promotes indirect interaction with LGR4 and membrane clearance of ZNRF3. Also interacts with RSPO2. Interacts with LMBR1L.

The protein resides in the cell membrane. It carries out the reaction S-ubiquitinyl-[E2 ubiquitin-conjugating enzyme]-L-cysteine + [acceptor protein]-L-lysine = [E2 ubiquitin-conjugating enzyme]-L-cysteine + N(6)-ubiquitinyl-[acceptor protein]-L-lysine.. It functions in the pathway protein modification; protein ubiquitination. With respect to regulation, negatively regulated by R-spondin proteins such as RSPO1: interaction with RSPO1 induces the indirect association between ZNRF3 and LGR4, promoting membrane clearance of ZNRF3. Its function is as follows. E3 ubiquitin-protein ligase that acts as a negative regulator of the Wnt signaling pathway by mediating the ubiquitination and subsequent degradation of Wnt receptor complex components Frizzled and LRP6. Acts on both canonical and non-canonical Wnt signaling pathway. Acts as a tumor suppressor in the intestinal stem cell zone by inhibiting the Wnt signaling pathway, thereby restricting the size of the intestinal stem cell zone. Along with RSPO2 and RNF43, constitutes a master switch that governs limb specification. The protein is E3 ubiquitin-protein ligase ZNRF3 (ZNRF3) of Homo sapiens (Human).